A 459-amino-acid polypeptide reads, in one-letter code: Phosphoglucosamine mutase (459 aa).

Ser102 acts as the Phosphoserine intermediate in catalysis. Mg(2+)-binding residues include Ser102, Asp243, Asp245, and Asp247. Ser102 is modified (phosphoserine).

The protein belongs to the phosphohexose mutase family. The cofactor is Mg(2+). Activated by phosphorylation.

The enzyme catalyses alpha-D-glucosamine 1-phosphate = D-glucosamine 6-phosphate. In terms of biological role, catalyzes the conversion of glucosamine-6-phosphate to glucosamine-1-phosphate. This Bartonella henselae (strain ATCC 49882 / DSM 28221 / CCUG 30454 / Houston 1) (Rochalimaea henselae) protein is Phosphoglucosamine mutase.